The primary structure comprises 461 residues: tRNA(Ile)-lysidine synthase (461 aa).

26 to 31 (SGGPDS) is a binding site for ATP.

It belongs to the tRNA(Ile)-lysidine synthase family.

The protein resides in the cytoplasm. The catalysed reaction is cytidine(34) in tRNA(Ile2) + L-lysine + ATP = lysidine(34) in tRNA(Ile2) + AMP + diphosphate + H(+). Ligates lysine onto the cytidine present at position 34 of the AUA codon-specific tRNA(Ile) that contains the anticodon CAU, in an ATP-dependent manner. Cytidine is converted to lysidine, thus changing the amino acid specificity of the tRNA from methionine to isoleucine. The chain is tRNA(Ile)-lysidine synthase from Clostridium acetobutylicum (strain ATCC 824 / DSM 792 / JCM 1419 / IAM 19013 / LMG 5710 / NBRC 13948 / NRRL B-527 / VKM B-1787 / 2291 / W).